Consider the following 251-residue polypeptide: Appressoria-specific virulence factor GAS1 (251 aa).

The N-terminal stretch at 1–21 (MSLKSLIAATILAAPLVAGHG) is a signal peptide. Residues 40 to 76 (VTSTPRDGTRRDPFQQDSTRFKGQQADTFGETVGGGQ) form a disordered region. Positions 54 to 66 (QQDSTRFKGQQAD) are enriched in polar residues.

It localises to the cytoplasm. Its function is as follows. Appressoria-specific virulence factor required for appressorial penetration in host and lesion development. The sequence is that of Appressoria-specific virulence factor GAS1 from Pyricularia oryzae (strain 70-15 / ATCC MYA-4617 / FGSC 8958) (Rice blast fungus).